Reading from the N-terminus, the 104-residue chain is UPF0145 protein DET1617 (104 aa).

Belongs to the UPF0145 family.

This Dehalococcoides mccartyi (strain ATCC BAA-2266 / KCTC 15142 / 195) (Dehalococcoides ethenogenes (strain 195)) protein is UPF0145 protein DET1617.